A 125-amino-acid chain; its full sequence is Small ribosomal subunit protein bS6 (125 aa).

The protein belongs to the bacterial ribosomal protein bS6 family.

Binds together with bS18 to 16S ribosomal RNA. The polypeptide is Small ribosomal subunit protein bS6 (rpsF) (Campylobacter jejuni subsp. jejuni serotype O:2 (strain ATCC 700819 / NCTC 11168)).